Consider the following 453-residue polypeptide: Armadillo repeat-containing X-linked protein 1 (453 aa).

Topologically, residues 1–6 (MGRTRE) are mitochondrial intermembrane. 2 mitochondrion outer membrane (MOM)-targeting sequence regions span residues 1 to 6 (MGRTRE) and 26 to 36 (RLAWGRDENEK). The helical; Signal-anchor transmembrane segment at 7–29 (AGCVAAGVVIGAGACYCVYRLAW) threads the bilayer. Residues 30–453 (GRDENEKIWD…VKVLKVLTKL (424 aa)) lie on the Cytoplasmic side of the membrane. A disordered region spans residues 140–182 (PSLPCPGGRGGGCHPTRSGSRAGGRASGKSKGKARSKSTRAPA). Over residues 167–177 (GKSKGKARSKS) the composition is skewed to basic residues. 4 ARM repeats span residues 195–235 (PYKI…NNAA), 237–276 (SFNQ…NLSV), 358–398 (PAMT…NIND), and 415–453 (SSLF…LTKL).

It belongs to the eutherian X-chromosome-specific Armcx family. As to quaternary structure, interacts with MIRO1.

The protein resides in the mitochondrion. Its subcellular location is the mitochondrion outer membrane. Functionally, regulates mitochondrial transport during axon regeneration. Increases the proportion of motile mitochondria by recruiting stationary mitochondria into the motile pool. Enhances mitochondria movement and neurite growth in both adult axons and embryonic neurons. Promotes neuronal survival and axon regeneration after nerve injury. May link mitochondria to the Trak1-kinesin motor complex via its interaction with MIRO1. The protein is Armadillo repeat-containing X-linked protein 1 (ARMCX1) of Pongo abelii (Sumatran orangutan).